A 168-amino-acid polypeptide reads, in one-letter code: MTCYRLAKRRDLFAFPYPIAIWRDPPKSVEIVRNLVADGGFKHIYTVGDVVTRNFLEYGLIPTSAAVDEKTRRGIRVERFSAFRSVVEVVNPPGYITDEAWSAVEKAVEGGVVVKVRGEEDMLSLAFIRLAPPRSIVAYGHYMGALIAIPVDWYRRDLLKLFDFLEKC.

Residues D49, V50, V51, D68, K70, and E120 each contribute to the GTP site.

It belongs to the GTP-dependent DPCK family.

It catalyses the reaction 3'-dephospho-CoA + GTP = GDP + CoA + H(+). Its pathway is cofactor biosynthesis; coenzyme A biosynthesis. Catalyzes the GTP-dependent phosphorylation of the 3'-hydroxyl group of dephosphocoenzyme A to form coenzyme A (CoA). This is GTP-dependent dephospho-CoA kinase from Pyrobaculum calidifontis (strain DSM 21063 / JCM 11548 / VA1).